The sequence spans 259 residues: GTP cyclohydrolase FolE2 (259 aa).

The protein belongs to the GTP cyclohydrolase IV family.

It carries out the reaction GTP + H2O = 7,8-dihydroneopterin 3'-triphosphate + formate + H(+). The protein operates within cofactor biosynthesis; 7,8-dihydroneopterin triphosphate biosynthesis; 7,8-dihydroneopterin triphosphate from GTP: step 1/1. Converts GTP to 7,8-dihydroneopterin triphosphate. The chain is GTP cyclohydrolase FolE2 from Thermosipho melanesiensis (strain DSM 12029 / CIP 104789 / BI429).